The primary structure comprises 400 residues: Multidrug resistance protein MdtH (400 aa).

Over 1–12 (MSRVSQARNLGK) the chain is Cytoplasmic. The helical transmembrane segment at 13–33 (YFLLIDNMLVVLGFFVVFPLI) threads the bilayer. The Periplasmic portion of the chain corresponds to 34-98 (SIRFVDQMGW…GFATMGIAHE (65 aa)). A helical transmembrane segment spans residues 99-116 (PWLLWFSCLLSGLGGTLF). Residues 117 to 138 (DPPRSALVVKLIRPQQRGRFFS) are Cytoplasmic-facing. A helical transmembrane segment spans residues 139–159 (LLMMQDSAGAVIGALLGSWLL). Residues 160 to 164 (QYDFR) lie on the Periplasmic side of the membrane. Residues 165–185 (LVCATGAVLFVLCAAFNAWLL) form a helical membrane-spanning segment. Topologically, residues 186 to 213 (PAWKLSTVRTPVREGMTRVMRDKRFVTY) are cytoplasmic. Residues 214-232 (VLTLAGYYMLAVQVMLPIM) form a helical membrane-spanning segment. At 233–241 (VNDVAGAPS) the chain is on the periplasmic side. Residues 242–262 (AVKWMYAIEACLSLTLLYPIA) form a helical membrane-spanning segment. The Cytoplasmic segment spans residues 263–274 (RWSEKHFRLEHR). Residues 275 to 295 (LMAGLLIMSLSMMPVGMVSGL) traverse the membrane as a helical segment. The Periplasmic portion of the chain corresponds to 296–297 (QQ). A helical membrane pass occupies residues 298 to 318 (LFTLICLFYIGSIIAEPARET). Residues 319–337 (LSASLADARARGSYMGFSR) lie on the Cytoplasmic side of the membrane. Residues 338–358 (LGLAIGGAIGYIGGGWLFDLG) traverse the membrane as a helical segment. The Periplasmic portion of the chain corresponds to 359 to 365 (KSAHQPE). Residues 366 to 386 (LPWMMLGIIGIFTFLALGWQF) form a helical membrane-spanning segment. At 387–400 (SQKRAARRLLERDA) the chain is on the cytoplasmic side.

It belongs to the major facilitator superfamily. DHA1 family. MdtH (TC 2.A.1.2.21) subfamily.

Its subcellular location is the cell inner membrane. In Shigella boydii serotype 4 (strain Sb227), this protein is Multidrug resistance protein MdtH.